The primary structure comprises 316 residues: 2,3-dihydroxyphenylpropionate/2,3-dihydroxicinnamic acid 1,2-dioxygenase (316 aa).

Histidine 115 serves as the catalytic Proton donor. Histidine 179 (proton acceptor) is an active-site residue.

It belongs to the LigB/MhpB extradiol dioxygenase family. In terms of assembly, homotetramer. The cofactor is Fe(2+).

It catalyses the reaction 3-(2,3-dihydroxyphenyl)propanoate + O2 = (2Z,4E)-2-hydroxy-6-oxonona-2,4-dienedioate + H(+). The catalysed reaction is (2E)-3-(2,3-dihydroxyphenyl)prop-2-enoate + O2 = (2Z,4E,7E)-2-hydroxy-6-oxonona-2,4,7-trienedioate + H(+). Its pathway is aromatic compound metabolism; 3-phenylpropanoate degradation. Its function is as follows. Catalyzes the non-heme iron(II)-dependent oxidative cleavage of 2,3-dihydroxyphenylpropionic acid and 2,3-dihydroxicinnamic acid into 2-hydroxy-6-ketononadienedioate and 2-hydroxy-6-ketononatrienedioate, respectively. The polypeptide is 2,3-dihydroxyphenylpropionate/2,3-dihydroxicinnamic acid 1,2-dioxygenase (Paraburkholderia xenovorans (strain LB400)).